A 266-amino-acid polypeptide reads, in one-letter code: Diphthine synthase (266 aa).

S-adenosyl-L-methionine-binding positions include Leu9, Asp84, Val87, 112–113, Leu169, Ala210, and His235; that span reads SI.

The protein belongs to the diphthine synthase family. Homodimer.

It carries out the reaction 2-[(3S)-amino-3-carboxypropyl]-L-histidyl-[translation elongation factor 2] + 3 S-adenosyl-L-methionine = diphthine-[translation elongation factor 2] + 3 S-adenosyl-L-homocysteine + 3 H(+). It functions in the pathway protein modification; peptidyl-diphthamide biosynthesis. In terms of biological role, S-adenosyl-L-methionine-dependent methyltransferase that catalyzes the trimethylation of the amino group of the modified target histidine residue in translation elongation factor 2 (EF-2), to form an intermediate called diphthine. The three successive methylation reactions represent the second step of diphthamide biosynthesis. This Methanosarcina mazei (strain ATCC BAA-159 / DSM 3647 / Goe1 / Go1 / JCM 11833 / OCM 88) (Methanosarcina frisia) protein is Diphthine synthase.